Reading from the N-terminus, the 416-residue chain is 4-hydroxy-3-methylbut-2-en-1-yl diphosphate synthase (flavodoxin) (416 aa).

Cysteine 304, cysteine 307, cysteine 350, and glutamate 357 together coordinate [4Fe-4S] cluster.

It belongs to the IspG family. [4Fe-4S] cluster is required as a cofactor.

It catalyses the reaction (2E)-4-hydroxy-3-methylbut-2-enyl diphosphate + oxidized [flavodoxin] + H2O + 2 H(+) = 2-C-methyl-D-erythritol 2,4-cyclic diphosphate + reduced [flavodoxin]. Its pathway is isoprenoid biosynthesis; isopentenyl diphosphate biosynthesis via DXP pathway; isopentenyl diphosphate from 1-deoxy-D-xylulose 5-phosphate: step 5/6. In terms of biological role, converts 2C-methyl-D-erythritol 2,4-cyclodiphosphate (ME-2,4cPP) into 1-hydroxy-2-methyl-2-(E)-butenyl 4-diphosphate. The protein is 4-hydroxy-3-methylbut-2-en-1-yl diphosphate synthase (flavodoxin) of Rhizobium johnstonii (strain DSM 114642 / LMG 32736 / 3841) (Rhizobium leguminosarum bv. viciae).